Reading from the N-terminus, the 431-residue chain is Glucose-1-phosphate adenylyltransferase (431 aa).

Residue lysine 39 coordinates beta-D-fructose 1,6-bisphosphate. The AMP site is built by arginine 40, histidine 46, and arginine 52. An alpha-D-glucose 1-phosphate-binding site is contributed by tyrosine 114. Arginine 130 serves as a coordination point for AMP. Residues glycine 179, 194-195 (EK), and serine 212 contribute to the alpha-D-glucose 1-phosphate site. Arginine 386 lines the AMP pocket. Residues 419–423 (REMLR) and 429–431 (QER) contribute to the beta-D-fructose 1,6-bisphosphate site.

It belongs to the bacterial/plant glucose-1-phosphate adenylyltransferase family. Homotetramer.

It carries out the reaction alpha-D-glucose 1-phosphate + ATP + H(+) = ADP-alpha-D-glucose + diphosphate. It participates in glycan biosynthesis; glycogen biosynthesis. Its activity is regulated as follows. Allosterically activated by fructose-1,6-bisphosphate (F16BP) and inhibited by AMP. Involved in the biosynthesis of ADP-glucose, a building block required for the elongation reactions to produce glycogen. Catalyzes the reaction between ATP and alpha-D-glucose 1-phosphate (G1P) to produce pyrophosphate and ADP-Glc. This chain is Glucose-1-phosphate adenylyltransferase, found in Enterobacter sp. (strain 638).